The primary structure comprises 185 residues: Pyruvate/ketoisovalerate oxidoreductases common subunit gamma (185 aa).

In terms of assembly, heterotetramer of one alpha, one beta, one delta and one gamma chain.

It catalyses the reaction 2 oxidized [2Fe-2S]-[ferredoxin] + pyruvate + CoA = 2 reduced [2Fe-2S]-[ferredoxin] + acetyl-CoA + CO2 + H(+). The enzyme catalyses 3-methyl-2-oxobutanoate + 2 oxidized [2Fe-2S]-[ferredoxin] + CoA = 2-methylpropanoyl-CoA + 2 reduced [2Fe-2S]-[ferredoxin] + CO2 + H(+). This Pyrococcus furiosus (strain ATCC 43587 / DSM 3638 / JCM 8422 / Vc1) protein is Pyruvate/ketoisovalerate oxidoreductases common subunit gamma (porG).